Here is a 234-residue protein sequence, read N- to C-terminus: Small ribosomal subunit protein uS3 (234 aa).

Residues 39-107 (IRKFLKKELY…EVSINIKEVK (69 aa)) enclose the KH type-2 domain.

It belongs to the universal ribosomal protein uS3 family. In terms of assembly, part of the 30S ribosomal subunit. Forms a tight complex with proteins S10 and S14.

Functionally, binds the lower part of the 30S subunit head. Binds mRNA in the 70S ribosome, positioning it for translation. In Helicobacter pylori (strain P12), this protein is Small ribosomal subunit protein uS3.